Here is a 496-residue protein sequence, read N- to C-terminus: Autophagy-related protein 21 (496 aa).

The WD 1 repeat unit spans residues 1 to 35 (MKVLQFNQDATCCVVAASSHQISIFNCDPFGKCFE). The segment at 41–86 (SKKKTSNNNGTASNSESRNNEESILITNGSRDRTDAEEEEDNEDNA) is disordered. Positions 46–57 (SNNNGTASNSES) are enriched in low complexity. A compositionally biased stretch (acidic residues) spans 75–84 (DAEEEEDNED). Residues 148 to 190 (VMNRKRMCVLLESDQIFIYDISCMKPLETIDLWEDHYKRSQAN) form a WD 2 repeat. Phosphothreonine is present on Thr213. A Phosphoserine modification is found at Ser237. 3 WD repeats span residues 294–334 (VHKG…DYMS), 346–385 (TRLC…NSLP), and 448–488 (VNES…GECV). Residues 342–346 (FRRGT) carry the L/FRRG motif motif.

The protein belongs to the WD repeat PROPPIN family.

Its subcellular location is the cytoplasm. The protein localises to the vacuole membrane. In terms of biological role, required for cytoplasm to vacuole transport (Cvt) vesicles formation and mitophagy. Involved in binding of phosphatidylethanolamine to ATG8 and in recruitment of ATG8 and ATG5 to the pre-autophagosomal structure. Protects ATG8 from ARG4-mediated cleavage. Essential for maturation of proaminopeptidase I. The polypeptide is Autophagy-related protein 21 (ATG21) (Saccharomyces cerevisiae (strain YJM789) (Baker's yeast)).